Consider the following 312-residue polypeptide: Ribosomal protein L11 methyltransferase (312 aa).

4 residues coordinate S-adenosyl-L-methionine: threonine 160, glycine 181, aspartate 203, and asparagine 246.

Belongs to the methyltransferase superfamily. PrmA family.

Its subcellular location is the cytoplasm. It catalyses the reaction L-lysyl-[protein] + 3 S-adenosyl-L-methionine = N(6),N(6),N(6)-trimethyl-L-lysyl-[protein] + 3 S-adenosyl-L-homocysteine + 3 H(+). Methylates ribosomal protein L11. The sequence is that of Ribosomal protein L11 methyltransferase from Staphylococcus aureus (strain USA300).